A 731-amino-acid chain; its full sequence is Gelsolin (731 aa).

The segment at 2–125 (VVEHPEFLKA…YKKGGVASGF (124 aa)) is actin-severing. The stretch at 25–107 (FDLVPVPPNL…VQGFESATFL (83 aa)) is one Gelsolin-like 1 repeat. Tyrosine 35 carries the post-translational modification Phosphotyrosine. Residues glycine 41, aspartate 42, glutamate 73, aspartate 85, glycine 90, and alanine 92 each coordinate Ca(2+). The segment at 72–75 (DESG) is actin-actin interfilament contact point. 111–118 (KSGLKYKK) lines the a 1,2-diacyl-sn-glycero-3-phospho-(1D-myo-inositol-4,5-bisphosphate) pocket. Valine 121 serves as a coordination point for Ca(2+). 137–145 (RLLQVKGRR) serves as a coordination point for a 1,2-diacyl-sn-glycero-3-phospho-(1D-myo-inositol-4,5-bisphosphate). A Gelsolin-like 2 repeat occupies 147–219 (VRATEVPVSW…FEEGAEPEAM (73 aa)). Positions 162 and 163 each coordinate Ca(2+). Cysteine 164 and cysteine 177 form a disulfide bridge. Glutamate 185, aspartate 235, glutamate 278, aspartate 279, and glutamate 303 together coordinate Ca(2+). Residues 266 to 338 (DENPFAQGAL…LPEGGETPLF (73 aa)) form a Gelsolin-like 3 repeat. 2 positions are modified to phosphotyrosine: tyrosine 358 and tyrosine 414. An actin-binding, Ca-sensitive region spans residues 383-731 (AAQHGMDDDG…LDRALAELAA (349 aa)). The Gelsolin-like 4 repeat unit spans residues 404 to 485 (SNKVPVDPAT…VQGKEPAHLM (82 aa)). Residues glycine 420, aspartate 421, glutamate 451, aspartate 463, glycine 468, proline 470, and threonine 500 each coordinate Ca(2+). At lysine 533 the chain carries N6-acetyllysine. The stretch at 533–591 (KAGALNSNDAFVLKTPSAAYLWVGAGASEAEKTGAQELLRVLRAQPVQVAEGSEPDSFW) is one Gelsolin-like 5 repeat. Residues asparagine 540 and aspartate 541 each coordinate Ca(2+). Phosphotyrosine is present on tyrosine 552. Glutamate 563 serves as a coordination point for Ca(2+). Tyrosine 600 is subject to Phosphotyrosine. A Gelsolin-like 6 repeat occupies 630–705 (IEEVPGEFMQ…VKQGFEPPSF (76 aa)). Residues aspartate 645, aspartate 646, and glutamate 668 each contribute to the Ca(2+) site. Residue threonine 691 is modified to Phosphothreonine.

The protein belongs to the villin/gelsolin family. Binds to actin and to fibronectin. Identified in a complex composed of ACTA1, COBL, GSN and TMSB4X. Interacts with the inactive form of EIF2AK2/PKR. Interacts with FLII.

The protein localises to the cytoplasm. Its subcellular location is the cytoskeleton. Calcium-regulated, actin-modulating protein that binds to the plus (or barbed) ends of actin monomers or filaments, preventing monomer exchange (end-blocking or capping). It can promote the assembly of monomers into filaments (nucleation) as well as sever filaments already formed. Plays a role in ciliogenesis. In Equus caballus (Horse), this protein is Gelsolin (GSN).